We begin with the raw amino-acid sequence, 1494 residues long: MDVLELLRVSGSNMYYSTFLADAWCYYISNQITMTMYLYCALGVLSMLFIGWFVYFKRLARLRLRHEIARSLSAVTMASGGDLRGPRFRKRDKMLFYGRRMLRKMKNVSGQMYSSGKGYKRRAVIRFARRILQLRRENMPLEVRTVEPPAEYLEETMEGSDRVPPDALYMLQSIRIFGHFEKPIFLRLCKHTQLLELMGGDYLFKITDPDDSVYIVQSGMINVYISNADGSTLSLKTVRKGESVTSLLSFIDVLSGNPSYYKTVTAKAIEKSVVIRLPMAAFQEVFKDSPDVMIRVIQVIMIRLQRVLFTALRNYLGLNAELVQNHMRFKGSSQGAGPSVYCSQTTRQATGSASATASAAAASGTAGSTHTAVPRPASSLSRYSQDEQHTLSDPNPGIPNLELSGDSVNTLFGEVNGGARLNSYPPLYHQRESDGNLSTRRGSITQQEQPEVGPVPSIDMRLVKSSAVDSLRKELGLPEQDAHIIDPFVEVREMEPNVTLITEGNADDVCVWFVMTGTLAVYQGNADATRIKQDKTDLLIHYVHPGEIVGGLAMLTGEASAYTIRSRNHSRVAFIRRAAIYQIMRQRPRIVLDLGNGVVRRLSPLVRQCDYALDWIFLESGRALYRQDESSDSTYIVLSGRMRSVITHPGGKKEIVGEYGKGDLVGIVEMITETSRTTTVMAVRDSELAKLPEGLFNAIKLRYPIVVTKLISFLSHRFLGSMQTRTTTGAPGAPVEANPVTHKYSTVALVPITDDVPLTPFTYELYHSLCAIGPVLRLTSDLARKQLGMNIFDASNEYRLTSWLAQQEDRNIITLYQCDNALSPWTQRCMRQADVVLIVGLGDHSHLVGKFEREIDRLALRTQKELVLLYPETASSKPANTLSWLNARPWVTKHHHVLCVKRIFTRKSQYRINDLYSRVLLSEPNMHSDFSRLARWLTGNSIGLVLGGGGARGAAHIGMLKAIQEAGIPIDMVGGVSIGALMGALWCSERNITTVTQKAREWSKKMTKWFLQLLDLTYPITSMFSGREFNKTIHETFGDVNIEDLWIPYFTLTTDITASCHRIHTNGSLWRYVRSSMSLSGYMPPLCDPKDGHLLLDGGYVNNLPGHLWRYCRASMSIAGVFPPFCDYRDGHLLLDGCYTNNVPADVMHNLGAAHIIAIDVGSQDDTDLTNYGDDLSGWWLLYKKWNPFTAPVKVPDLPDIQSRLAYVSCVRQLEEVKNSDYCEYIRPPIDKYKTLAFGSFDEIRDVGYVFGKNYFEGMAKAGRLGRFNQWFSKEPPKRGNHASLNEYTFIDLAQIVCRLPETYGLNPSDLFSEDEDCDGYISEPTTLNTDVRRYQVPRGGNSLSLSETEMDMDSDVEMDLKMERKMDKATQSTPPLQSKAQILRRKHSKEEARHEWEIKREQKQELAREQELERERELSQKGTTAGATGYTPNAVIATQTSLIFMDEEDEMDKKKTKDNDRDEVRGSAEDKGKEKEEDKENRSNTNNETKNYL.

Residues 1-35 (MDVLELLRVSGSNMYYSTFLADAWCYYISNQITMT) are Lumenal-facing. Residues 36–56 (MYLYCALGVLSMLFIGWFVYF) traverse the membrane as a helical segment. The Cytoplasmic portion of the chain corresponds to 57–1494 (KRLARLRLRH…NTNNETKNYL (1438 aa)). 176–303 (IFGHFEKPIF…IRVIQVIMIR (128 aa)) lines the a nucleoside 3',5'-cyclic phosphate pocket. Positions 362–372 (ASGTAGSTHTA) are enriched in low complexity. 2 disordered regions span residues 362–405 (ASGT…ELSG) and 422–452 (NSYP…QPEV). Residues 435-449 (GNLSTRRGSITQQEQ) are compositionally biased toward polar residues. Phosphoserine is present on serine 443. A nucleoside 3',5'-cyclic phosphate is bound by residues 474–601 (ELGL…VVRR) and 590–717 (IVLD…LSHR). Residues 944–1110 (LVLGGGGARG…VNNLPGHLWR (167 aa)) form the PNPLA domain. The short motif at 948–953 (GGGARG) is the GXGXXG element. The short motif at 975–979 (GVSIG) is the GXSXG element. Serine 977 functions as the Nucleophile in the catalytic mechanism. The Proton acceptor role is filled by aspartate 1097. The short motif at 1097–1099 (DGG) is the DGA/G element. The tract at residues 1367–1494 (MDKATQSTPP…NTNNETKNYL (128 aa)) is disordered. Positions 1370–1381 (ATQSTPPLQSKA) are enriched in polar residues. Basic and acidic residues-rich tracts occupy residues 1389 to 1420 (SKEE…RELS) and 1452 to 1483 (MDKK…KENR). A compositionally biased stretch (polar residues) spans 1484 to 1494 (SNTNNETKNYL).

The protein belongs to the NTE family. In terms of assembly, interacts with Pka-C3; interaction inhibits the catalytic function of Pka-C3 and the esterase activity of sws.

It localises to the endoplasmic reticulum membrane. The catalysed reaction is a 1-acyl-sn-glycero-3-phosphocholine + H2O = sn-glycerol 3-phosphocholine + a fatty acid + H(+). Its function is as follows. Phospholipase B that deacylates intracellular phosphatidylcholine (PtdCho), generating glycerophosphocholine (GroPtdCho). This deacylation occurs at both sn-2 and sn-1 positions of PtdCho. Its specific chemical modification by certain organophosphorus (OP) compounds leads to distal axonopathy. Plays a role in the signaling mechanism between neurons and glia that regulates glia wrapping during development of the adult brain. Essential for membrane lipid homeostasis and cell survival in both neurons and glia of the adult brain. The polypeptide is Neuropathy target esterase sws (Drosophila pseudoobscura pseudoobscura (Fruit fly)).